The sequence spans 109 residues: Nucleoid-associated protein Spea_1509 (109 aa).

Residues 87–109 (NQKEKMAEVTGGMQLPPGMKMPF) form a disordered region.

The protein belongs to the YbaB/EbfC family. Homodimer.

Its subcellular location is the cytoplasm. It is found in the nucleoid. Binds to DNA and alters its conformation. May be involved in regulation of gene expression, nucleoid organization and DNA protection. This chain is Nucleoid-associated protein Spea_1509, found in Shewanella pealeana (strain ATCC 700345 / ANG-SQ1).